The sequence spans 252 residues: HTH-type transcriptional regulator XynR (252 aa).

Residues 4–66 enclose the HTH iclR-type domain; sequence IQSVERALQI…PENGKYRLGM (63 aa). The H-T-H motif DNA-binding region spans 25–45; it reads KITDISKLMGLSKSTLHSLLK. One can recognise an IclR-ED domain in the interval 81–250; the sequence is IRQKAKGWLT…GLALSRALGY (170 aa).

With respect to regulation, activity may be controlled by xylonate. Involved in regulation of xylonate catabolism. Represses the expression of both yagA and yagEF operons. Binds mainly at a single site within the spacer of the bidirectional transcription units yagA and yagEF. The chain is HTH-type transcriptional regulator XynR from Escherichia coli (strain K12).